We begin with the raw amino-acid sequence, 527 residues long: Nucleus accumbens-associated protein 1 (527 aa).

Residues 30–94 form the BTB domain; it reads CDVSVVVKGH…CYTGRLSMNV (65 aa). The interval 131-153 is disordered; sequence QGLHAEEAPSSEPQSPVAQTSGW. The span at 141–152 shows a compositional bias: polar residues; it reads SEPQSPVAQTSG. A Glycyl lysine isopeptide (Lys-Gly) (interchain with G-Cter in SUMO1); alternate cross-link involves residue K167. Residue K167 forms a Glycyl lysine isopeptide (Lys-Gly) (interchain with G-Cter in SUMO2); alternate linkage. K183 is covalently cross-linked (Glycyl lysine isopeptide (Lys-Gly) (interchain with G-Cter in SUMO2)). Position 188 is a phosphoserine (S188). The segment at 210-292 is disordered; it reads DLAANRPHQP…DEEEDGGEEG (83 aa). The span at 225–251 shows a compositional bias: low complexity; sequence APVVAAAQPAVAAGAGQPAGGVAAAGG. Positions 255–277 are enriched in polar residues; sequence GPSTSERTSPGTSSAYTSDSPGS. S259 carries the post-translational modification Phosphoserine; by PKC. The span at 281–292 shows a compositional bias: acidic residues; the sequence is EEDEEEDGGEEG. Residues K318, K452, K480, K483, and K498 each participate in a glycyl lysine isopeptide (Lys-Gly) (interchain with G-Cter in SUMO2) cross-link. One can recognise a BEN domain in the interval 374–471; it reads GTNVYITRAQ…DMCTNARRVV (98 aa).

In terms of assembly, homooligomer; mediated by the BTB domain. Interacts with HDAC3 and HDAC4. Interacts (via BTB domain) with CUL3, PSMD7 and RCOR1. Overexpressed in several types of carcinomas including ovarian serous carcinomas. Expression levels positively correlate with tumor recurrence in ovarian serous carcinomas, and intense immunoreactivity in primary ovarian tumors predicts early recurrence. Up-regulated in ovarian carcinomas after chemotherapy, suggesting a role in development of chemotherapy resistance in ovarian cancer.

The protein localises to the nucleus. The protein resides in the cytoplasm. Functions as a transcriptional repressor. Seems to function as a transcriptional corepressor in neuronal cells through recruitment of HDAC3 and HDAC4. Contributes to tumor progression, and tumor cell proliferation and survival. This may be mediated at least in part through repressing transcriptional activity of GADD45GIP1. Required for recruiting the proteasome from the nucleus to the cytoplasm and dendritic spines. This is Nucleus accumbens-associated protein 1 (NACC1) from Homo sapiens (Human).